We begin with the raw amino-acid sequence, 137 residues long: Ribosome-binding factor A (137 aa).

This sequence belongs to the RbfA family. In terms of assembly, monomer. Binds 30S ribosomal subunits, but not 50S ribosomal subunits or 70S ribosomes.

Its subcellular location is the cytoplasm. One of several proteins that assist in the late maturation steps of the functional core of the 30S ribosomal subunit. Associates with free 30S ribosomal subunits (but not with 30S subunits that are part of 70S ribosomes or polysomes). Required for efficient processing of 16S rRNA. May interact with the 5'-terminal helix region of 16S rRNA. In Cereibacter sphaeroides (strain ATCC 17029 / ATH 2.4.9) (Rhodobacter sphaeroides), this protein is Ribosome-binding factor A.